The following is a 297-amino-acid chain: Ribosomal RNA small subunit methyltransferase H (297 aa).

S-adenosyl-L-methionine contacts are provided by residues 36-38 (GGH), Asp56, Leu90, Asp104, and His111.

The protein belongs to the methyltransferase superfamily. RsmH family.

The protein localises to the cytoplasm. It carries out the reaction cytidine(1402) in 16S rRNA + S-adenosyl-L-methionine = N(4)-methylcytidine(1402) in 16S rRNA + S-adenosyl-L-homocysteine + H(+). Specifically methylates the N4 position of cytidine in position 1402 (C1402) of 16S rRNA. The protein is Ribosomal RNA small subunit methyltransferase H of Dictyoglomus thermophilum (strain ATCC 35947 / DSM 3960 / H-6-12).